The primary structure comprises 206 residues: Small ribosomal subunit protein uS2 (206 aa).

The protein belongs to the universal ribosomal protein uS2 family.

This Pyrobaculum neutrophilum (strain DSM 2338 / JCM 9278 / NBRC 100436 / V24Sta) (Thermoproteus neutrophilus) protein is Small ribosomal subunit protein uS2.